Consider the following 506-residue polypeptide: Sodium-coupled neutral amino acid symporter 2 (506 aa).

A disordered region spans residues 1–23; it reads MKKAEMGRFNISPDEDSSSYSSN. Residues 1–76 are Cytoplasmic-facing; the sequence is MKKAEMGRFN…HPGTTSFGMS (76 aa). The interval 1-96 is regulates protein turnover upon amino acid deprivation; sequence MKKAEMGRFN…SGILGLSYAM (96 aa). 4 positions are modified to phosphoserine: serine 12, serine 21, serine 22, and serine 55. A helical membrane pass occupies residues 77 to 96; sequence VFNLSNAIVGSGILGLSYAM. Asparagine 82 contacts Na(+). Residues 97-102 are Extracellular-facing; sequence ANTGIA. The helical transmembrane segment at 103–123 threads the bilayer; sequence LFIILLTFVSIFSLYSVHLLL. Topologically, residues 124–158 are cytoplasmic; it reads KTANEGGSLLYEQLGYKAFGLVGKLAASGSITMQN. The chain crosses the membrane as a helical span at residues 159-177; that stretch reads IGAMSSYLFIVKYELPLVI. Topologically, residues 178–188 are extracellular; the sequence is QALTNIEDKTG. The helical transmembrane segment at 189 to 209 threads the bilayer; that stretch reads LWYLNGNYLVLLVSLVVILPL. At 210-217 the chain is on the cytoplasmic side; sequence SLFRNLGY. Residues 218-238 traverse the membrane as a helical segment; the sequence is LGYTSGLSLLCMVFFLIVVIC. Topologically, residues 239–292 are extracellular; it reads KKFQVPCPVEAALIINETINTTLTQPTALVPALSHNVTENDSCRPHYFIFNSQT. Cysteine 245 and cysteine 281 are disulfide-bonded. N-linked (GlcNAc...) asparagine glycosylation is found at asparagine 258 and asparagine 274. Residues 293–313 traverse the membrane as a helical segment; the sequence is VYAVPILIFSFVCHPAVLPIY. Residues 314-329 lie on the Cytoplasmic side of the membrane; sequence EELKDRSRRRMMNVSK. The helical transmembrane segment at 330 to 350 threads the bilayer; that stretch reads ISFFAMFLMYLLAALFGYLTF. The Extracellular portion of the chain corresponds to 351–371; that stretch reads YEHVESELLHTYSSILGTDIL. A helical membrane pass occupies residues 372 to 392; the sequence is LLIVRLAVLMAVTLTVPVVIF. Residue threonine 386 participates in Na(+) binding. The Cytoplasmic portion of the chain corresponds to 393–413; sequence PIRSSVTHLLCASKDFSWWRH. The chain crosses the membrane as a helical span at residues 414–434; it reads SLITVSILAFTNLLVIFVPTI. The Extracellular segment spans residues 435–436; that stretch reads RD. A helical transmembrane segment spans residues 437–457; sequence IFGFIGASAASMLIFILPSAF. Residues 458 to 472 lie on the Cytoplasmic side of the membrane; it reads YIKLVKKEPMKSVQK. A helical transmembrane segment spans residues 473–495; the sequence is IGALFFLLSGVLVMTGSMALIVL. Residues 496 to 506 lie on the Extracellular side of the membrane; that stretch reads DWVHNAPGGGH.

The protein belongs to the amino acid/polyamine transporter 2 family. Post-translationally, polyubiquitination by NEDD4L regulates the degradation and the activity of SLC38A2.

The protein resides in the cell membrane. It catalyses the reaction L-alanine(in) + Na(+)(in) = L-alanine(out) + Na(+)(out). It carries out the reaction glycine(in) + Na(+)(in) = glycine(out) + Na(+)(out). The catalysed reaction is L-serine(in) + Na(+)(in) = L-serine(out) + Na(+)(out). The enzyme catalyses L-proline(in) + Na(+)(in) = L-proline(out) + Na(+)(out). It catalyses the reaction L-methionine(in) + Na(+)(in) = L-methionine(out) + Na(+)(out). It carries out the reaction L-histidine(in) + Na(+)(in) = L-histidine(out) + Na(+)(out). The catalysed reaction is L-asparagine(in) + Na(+)(in) = L-asparagine(out) + Na(+)(out). The enzyme catalyses L-glutamine(in) + Na(+)(in) = L-glutamine(out) + Na(+)(out). It catalyses the reaction L-threonine(in) + Na(+)(in) = L-threonine(out) + Na(+)(out). It carries out the reaction L-leucine(in) + Na(+)(in) = L-leucine(out) + Na(+)(out). The catalysed reaction is L-phenylalanine(in) + Na(+)(in) = L-phenylalanine(out) + Na(+)(out). Its activity is regulated as follows. Inhibited by N-methyl-D-glucamine. Inhibited by choline. Allosteric regulation of sodium ions binding by pH. Symporter that cotransports neutral amino acids and sodium ions from the extracellular to the intracellular side of the cell membrane. The transport is pH-sensitive, Li(+)-intolerant, electrogenic, driven by the Na(+) electrochemical gradient and cotransports of neutral amino acids and sodium ions with a stoichiometry of 1:1. May function in the transport of amino acids at the blood-brain barrier. May function in the transport of amino acids in the supply of maternal nutrients to the fetus through the placenta. Maintains a key metabolic glutamine/glutamate balance underpinning retrograde signaling by dendritic release of the neurotransmitter glutamate. Transports L-proline in differentiating osteoblasts for the efficient synthesis of proline-enriched proteins and provides proline essential for osteoblast differentiation and bone formation during bone development. This Pan paniscus (Pygmy chimpanzee) protein is Sodium-coupled neutral amino acid symporter 2.